Consider the following 380-residue polypeptide: Tryptophan 2,3-dioxygenase (380 aa).

Substrate contacts are provided by residues 57-61 and R128; that span reads FIITH. H313 is a binding site for heme. T328 serves as a coordination point for substrate.

This sequence belongs to the tryptophan 2,3-dioxygenase family. In terms of assembly, homotetramer. Dimer of dimers. Requires heme as cofactor.

It carries out the reaction L-tryptophan + O2 = N-formyl-L-kynurenine. It participates in amino-acid degradation; L-tryptophan degradation via kynurenine pathway; L-kynurenine from L-tryptophan: step 1/2. Its pathway is pigment biosynthesis; ommochrome biosynthesis. Functionally, heme-dependent dioxygenase that catalyzes the oxidative cleavage of the L-tryptophan (L-Trp) pyrrole ring and converts L-tryptophan to N-formyl-L-kynurenine. Catalyzes the oxidative cleavage of the indole moiety. This is Tryptophan 2,3-dioxygenase from Drosophila persimilis (Fruit fly).